We begin with the raw amino-acid sequence, 385 residues long: Benzoylsuccinyl-CoA thiolase subunit BbsB (385 aa).

CoA is bound at residue R19. Catalysis depends on C84, which acts as the Acyl-thioester intermediate. Residues G121, R193, C204, and C205 each coordinate CoA.

This sequence belongs to the thiolase-like superfamily. Thiolase family. As to quaternary structure, heterotetramer composed of two BbsA subunits and two BbsB subunits. BbsB forms homodimeric subcomplexes. Both BbsA and BbsB are essential for enzymatic activity.

The catalysed reaction is (S)-2-benzoylsuccinyl-CoA + CoA = benzoyl-CoA + succinyl-CoA. Its pathway is xenobiotic degradation; toluene degradation. Component of the BbsAB thiolase complex, which catalyzes the thiolytic cleavage of (S)-2-benzoylsuccinyl-CoA to succinyl-CoA and benzoyl-CoA, the final step of anaerobic toluene metabolism. The protein is Benzoylsuccinyl-CoA thiolase subunit BbsB of Thauera aromatica.